The primary structure comprises 1398 residues: DNA-directed RNA polymerase subunit beta' (1398 aa).

Zn(2+) contacts are provided by Cys-70, Cys-72, Cys-85, and Cys-88. 3 residues coordinate Mg(2+): Asp-460, Asp-462, and Asp-464. The Zn(2+) site is built by Cys-814, Cys-888, Cys-895, and Cys-898.

It belongs to the RNA polymerase beta' chain family. The RNAP catalytic core consists of 2 alpha, 1 beta, 1 beta' and 1 omega subunit. When a sigma factor is associated with the core the holoenzyme is formed, which can initiate transcription. The cofactor is Mg(2+). Requires Zn(2+) as cofactor.

It catalyses the reaction RNA(n) + a ribonucleoside 5'-triphosphate = RNA(n+1) + diphosphate. In terms of biological role, DNA-dependent RNA polymerase catalyzes the transcription of DNA into RNA using the four ribonucleoside triphosphates as substrates. This is DNA-directed RNA polymerase subunit beta' from Pseudomonas putida (Arthrobacter siderocapsulatus).